A 447-amino-acid polypeptide reads, in one-letter code: MKGYEVNFDGLVGPTHHYAGLSFGNEASTKNCNNLSNPKLAAKQGLLKMKALADMGMKQGVLAPHERPHVPMLRRLGFTGDDISVVAQAMRYSPELLSSLSSASPMWTANAATVSPSADSQDERVHFTAANLNNKFHRSIEAETTSQVLQAIFKNERHFVHHEALPQVALFGDEGAANHNRLGGDYAKRGVQVFVYGQQHLNNGLPGPKRYPARQTREASEAIARLHRLDESHTVFVQQNPDVIDQGVFHNDVIAVSNQQVSFHHQHAFLNQDQAFAEIRQKMASIGEDFISIEVPENRVTVDDAVATYLFNSQILTRPDGGMTIVVPEESRQNAAVWSYLNDMIQMGTPIDAIQVYDLRESMRNGGGPACLRLRVALNETELNAVNPKVLMNDQLFMTLNQWVDKHYRDRLAQEDLADPHLLMESRMAFDELTKILGLGSVYPFQK.

Substrate contacts are provided by residues 19–28 (AGLSFGNEAS), Asn-110, and 137–138 (HR). Glu-174 is an active-site residue. Position 214 (Arg-214) interacts with substrate. The active site involves His-250. Residues Asp-252 and Asn-365 each coordinate substrate. Cys-371 serves as the catalytic Nucleophile.

This sequence belongs to the succinylarginine dihydrolase family. In terms of assembly, homodimer.

The catalysed reaction is N(2)-succinyl-L-arginine + 2 H2O + 2 H(+) = N(2)-succinyl-L-ornithine + 2 NH4(+) + CO2. Its pathway is amino-acid degradation; L-arginine degradation via AST pathway; L-glutamate and succinate from L-arginine: step 2/5. Its function is as follows. Catalyzes the hydrolysis of N(2)-succinylarginine into N(2)-succinylornithine, ammonia and CO(2). The chain is N-succinylarginine dihydrolase from Acinetobacter baumannii (strain SDF).